The primary structure comprises 482 residues: Lipoamide acyltransferase component of branched-chain alpha-keto acid dehydrogenase complex, mitochondrial (482 aa).

The N-terminal 61 residues, Met1–Gln61, are a transit peptide targeting the mitochondrion. The Lipoyl-binding domain maps to Ile64–Glu139. The residue at position 105 (Lys105) is an N6-lipoyllysine. Lys133 is subject to N6-succinyllysine. Residues Asp145–Glu160 form a critical for association with PPM1K region. Residues Ser146–Thr171 form a disordered region. The span at Ser157–Gly168 shows a compositional bias: basic and acidic residues. A Peripheral subunit-binding (PSBD) domain is found at Leu172–Leu209. An N6-acetyllysine; alternate modification is found at Lys196. Lys196 is subject to N6-succinyllysine; alternate. The residue at position 202 (Lys202) is an N6-acetyllysine. A compositionally biased stretch (pro residues) spans Pro218–Pro230. The interval Pro218–Pro238 is disordered. At Ser220 the chain carries Phosphoserine. Lys243 and Lys250 each carry N6-acetyllysine. Position 261 is an N6-succinyllysine (Lys261). Lys289 carries the post-translational modification N6-acetyllysine; alternate. Lys289 carries the N6-succinyllysine; alternate modification. Arg291 is a CoA binding site. Lys295 and Lys304 each carry N6-acetyllysine. Ser306, Asp349, Gln378, Ser399, Asn400, Ser403, Gly424, and Ile426 together coordinate CoA. An N6-acetyllysine modification is found at Lys435. Residue Lys440 is modified to N6-acetyllysine; alternate. Lys440 bears the N6-succinyllysine; alternate mark. Active-site residues include His452 and Asp456.

It belongs to the 2-oxoacid dehydrogenase family. In terms of assembly, forms a 24-polypeptide structural core with octahedral symmetry that represents the E2 component of the branched-chain alpha-ketoacid dehydrogenase (BCKDH) complex. The BCKDH complex is composed of three major building blocks E1, E2 and E3. It is organized around E2, a 24-meric cubic core composed of DBT, to which are associated 6 to 12 copies of E1, and approximately 6 copies of the dehydrogenase E3, a DLD dimer. Interacts with PPM1K with a 24:1 stoichiometry; the N-terminal region (residues 49-61) of PPM1K and C-terminal linker of the lipoyl domain of DBT/E2 (residues 145-160) are critical for this interaction whereas the lipoyl prosthetic group is dispensable. This interaction requires colocalization in mitochondria. PPM1K competes with BCKDK for binding to DBT; this interaction is modulated by branched-chain alpha-keto acids (BCKAs). At steady state, BCKDH holoenzyme preferentially binds BCKDK and BCKDHA is phosphorylated. In response to high levels of BCKAs, BCKDK is replaced by PPM1K leading to BCKDHA dephosphorylation. (R)-lipoate is required as a cofactor. As to expression, expressed in kidney (at protein level).

It localises to the mitochondrion matrix. The catalysed reaction is N(6)-[(R)-dihydrolipoyl]-L-lysyl-[protein] + 2-methylpropanoyl-CoA = N(6)-[(R)-S(8)-2-methylpropanoyldihydrolipoyl]-L-lysyl-[protein] + CoA. In terms of biological role, the branched-chain alpha-keto dehydrogenase complex catalyzes the overall conversion of alpha-keto acids to acyl-CoA and CO(2). It contains multiple copies of three enzymatic components: branched-chain alpha-keto acid decarboxylase (E1), lipoamide acyltransferase (E2) and lipoamide dehydrogenase (E3). Within this complex, the catalytic function of this enzyme is to accept, and to transfer to coenzyme A, acyl groups that are generated by the branched-chain alpha-keto acid decarboxylase component. The polypeptide is Lipoamide acyltransferase component of branched-chain alpha-keto acid dehydrogenase complex, mitochondrial (DBT) (Bos taurus (Bovine)).